A 179-amino-acid polypeptide reads, in one-letter code: Peptide deformylase (179 aa).

Fe cation contacts are provided by Cys-103 and His-145. Glu-146 is a catalytic residue. His-149 lines the Fe cation pocket.

This sequence belongs to the polypeptide deformylase family. Requires Fe(2+) as cofactor.

The enzyme catalyses N-terminal N-formyl-L-methionyl-[peptide] + H2O = N-terminal L-methionyl-[peptide] + formate. Functionally, removes the formyl group from the N-terminal Met of newly synthesized proteins. Requires at least a dipeptide for an efficient rate of reaction. N-terminal L-methionine is a prerequisite for activity but the enzyme has broad specificity at other positions. The sequence is that of Peptide deformylase from Leptospira biflexa serovar Patoc (strain Patoc 1 / Ames).